A 256-amino-acid chain; its full sequence is tRNA (guanine-N(7)-)-methyltransferase (256 aa).

Residues 1–43 (MDVDPVNSEMELDNKPTCETVPGLPQKKHYRQRAHSNPHSDHD) form a disordered region. Over residues 26-36 (QKKHYRQRAHS) the composition is skewed to basic residues. Residues Gly74, 97–98 (EI), 132–133 (NA), and Leu152 contribute to the S-adenosyl-L-methionine site. Asp155 is an active-site residue. Position 230-232 (230-232 (TEE)) interacts with S-adenosyl-L-methionine.

Belongs to the class I-like SAM-binding methyltransferase superfamily. TrmB family.

It is found in the nucleus. It carries out the reaction guanosine(46) in tRNA + S-adenosyl-L-methionine = N(7)-methylguanosine(46) in tRNA + S-adenosyl-L-homocysteine. It functions in the pathway tRNA modification; N(7)-methylguanine-tRNA biosynthesis. Catalyzes the formation of N(7)-methylguanine at position 46 (m7G46) in tRNA. The protein is tRNA (guanine-N(7)-)-methyltransferase of Caenorhabditis briggsae.